A 71-amino-acid chain; its full sequence is UPF0437 protein asl1434 (71 aa).

The protein belongs to the UPF0437 family.

The sequence is that of UPF0437 protein asl1434 from Nostoc sp. (strain PCC 7120 / SAG 25.82 / UTEX 2576).